Consider the following 275-residue polypeptide: Bifunctional protein FolD (275 aa).

NADP(+) contacts are provided by residues 161–163 (GRS), Ser-186, and Thr-227.

Belongs to the tetrahydrofolate dehydrogenase/cyclohydrolase family. In terms of assembly, homodimer.

The catalysed reaction is (6R)-5,10-methylene-5,6,7,8-tetrahydrofolate + NADP(+) = (6R)-5,10-methenyltetrahydrofolate + NADPH. It catalyses the reaction (6R)-5,10-methenyltetrahydrofolate + H2O = (6R)-10-formyltetrahydrofolate + H(+). The protein operates within one-carbon metabolism; tetrahydrofolate interconversion. In terms of biological role, catalyzes the oxidation of 5,10-methylenetetrahydrofolate to 5,10-methenyltetrahydrofolate and then the hydrolysis of 5,10-methenyltetrahydrofolate to 10-formyltetrahydrofolate. In Parafrankia sp. (strain EAN1pec), this protein is Bifunctional protein FolD.